A 302-amino-acid chain; its full sequence is Probable lipid kinase YegS-like (302 aa).

The DAGKc domain occupies 1-129; sequence MDKDKVLLVL…IDLGEVNGKL (129 aa). Residues threonine 39, 65-71, and threonine 92 contribute to the ATP site; that span reads GDGTLRE. Mg(2+) is bound by residues arginine 210, aspartate 213, and leucine 215. Glutamate 268 serves as the catalytic Proton acceptor.

Belongs to the diacylglycerol/lipid kinase family. YegS lipid kinase subfamily. Requires Mg(2+) as cofactor. Ca(2+) serves as cofactor.

It localises to the cytoplasm. In terms of biological role, probably phosphorylates lipids; the in vivo substrate is unknown. This is Probable lipid kinase YegS-like from Pseudomonas aeruginosa (strain ATCC 15692 / DSM 22644 / CIP 104116 / JCM 14847 / LMG 12228 / 1C / PRS 101 / PAO1).